A 411-amino-acid chain; its full sequence is Protein translocase subunit SecY (411 aa).

A run of 10 helical transmembrane segments spans residues I11–G31, I52–I72, A111–F131, F135–L155, G163–L180, S197–V217, V253–I273, L291–V311, T349–V369, and G377–I397.

This sequence belongs to the SecY/SEC61-alpha family. In terms of assembly, component of the plastid Sec protein translocase complex, which is composed of at least SecY, SecE and SecG.

The protein localises to the plastid. It is found in the chloroplast thylakoid membrane. In terms of biological role, the central subunit of the protein translocation channel SecYE. Consists of two halves formed by TMs 1-5 and 6-10. These two domains form a lateral gate at the front which open onto the bilayer between TMs 2 and 7, and are clamped together by SecE at the back. The channel is closed by both a pore ring composed of hydrophobic SecY resides and a short helix (helix 2A) on the extracellular side of the membrane which forms a plug. The chain is Protein translocase subunit SecY from Pyropia yezoensis (Susabi-nori).